The following is a 401-amino-acid chain: tRNA(Met) cytidine acetate ligase (401 aa).

ATP-binding positions include 7-20 (VVEY…HLYH), Gly-101, Asn-160, and 185-186 (RI).

The protein belongs to the TmcAL family.

The protein localises to the cytoplasm. The enzyme catalyses cytidine(34) in elongator tRNA(Met) + acetate + ATP = N(4)-acetylcytidine(34) in elongator tRNA(Met) + AMP + diphosphate. In terms of biological role, catalyzes the formation of N(4)-acetylcytidine (ac(4)C) at the wobble position of elongator tRNA(Met), using acetate and ATP as substrates. First activates an acetate ion to form acetyladenylate (Ac-AMP) and then transfers the acetyl group to tRNA to form ac(4)C34. The protein is tRNA(Met) cytidine acetate ligase of Anoxybacillus flavithermus (strain DSM 21510 / WK1).